The chain runs to 491 residues: Glutamyl-tRNA(Gln) amidotransferase subunit A (491 aa).

Active-site charge relay system residues include Lys79 and Ser154. Residue Ser178 is the Acyl-ester intermediate of the active site.

Belongs to the amidase family. GatA subfamily. As to quaternary structure, heterotrimer of A, B and C subunits.

It catalyses the reaction L-glutamyl-tRNA(Gln) + L-glutamine + ATP + H2O = L-glutaminyl-tRNA(Gln) + L-glutamate + ADP + phosphate + H(+). Its function is as follows. Allows the formation of correctly charged Gln-tRNA(Gln) through the transamidation of misacylated Glu-tRNA(Gln) in organisms which lack glutaminyl-tRNA synthetase. The reaction takes place in the presence of glutamine and ATP through an activated gamma-phospho-Glu-tRNA(Gln). This chain is Glutamyl-tRNA(Gln) amidotransferase subunit A, found in Natranaerobius thermophilus (strain ATCC BAA-1301 / DSM 18059 / JW/NM-WN-LF).